The sequence spans 95 residues: Antitoxin TacA1 (95 aa).

Residues 59 to 95 (FNFNDEQYEEFINLLDAPVADDPVIEKLLARKPQWDV) form a neutralization domain region.

This sequence belongs to the TacA antitoxin family. Homodimer. Forms a complex with cognate toxin TacT1. Forms a 4:2 antitoxin:toxin complex with cognate toxin TacT1.

In terms of biological role, antitoxin component of a type II toxin-antitoxin (TA) system. Counteracts the toxic effect of cognate toxin TacT1 (T8), but not TacT2 or TacT3. Plays a role in persister cell formation. Its function is as follows. The TacA1-TacT1 complex binds (and probably represses) its own promoter DNA but not that of tacA3-tacT3, it does not repress the tacA3-tacT3 promoter. This is Antitoxin TacA1 from Salmonella typhimurium (strain 14028s / SGSC 2262).